The chain runs to 890 residues: Alanine--tRNA ligase (890 aa).

4 residues coordinate Zn(2+): H565, H569, C677, and H681.

The protein belongs to the class-II aminoacyl-tRNA synthetase family. Requires Zn(2+) as cofactor.

It localises to the cytoplasm. The catalysed reaction is tRNA(Ala) + L-alanine + ATP = L-alanyl-tRNA(Ala) + AMP + diphosphate. Catalyzes the attachment of alanine to tRNA(Ala) in a two-step reaction: alanine is first activated by ATP to form Ala-AMP and then transferred to the acceptor end of tRNA(Ala). Also edits incorrectly charged Ser-tRNA(Ala) and Gly-tRNA(Ala) via its editing domain. The polypeptide is Alanine--tRNA ligase (Zymomonas mobilis subsp. mobilis (strain ATCC 31821 / ZM4 / CP4)).